Consider the following 417-residue polypeptide: Serine hydroxymethyltransferase (417 aa).

(6S)-5,6,7,8-tetrahydrofolate contacts are provided by residues leucine 112 and 116–118 (GHL). Residue lysine 221 is modified to N6-(pyridoxal phosphate)lysine. Glutamate 247 is a binding site for (6S)-5,6,7,8-tetrahydrofolate.

The protein belongs to the SHMT family. As to quaternary structure, homodimer. It depends on pyridoxal 5'-phosphate as a cofactor.

Its subcellular location is the cytoplasm. It carries out the reaction (6R)-5,10-methylene-5,6,7,8-tetrahydrofolate + glycine + H2O = (6S)-5,6,7,8-tetrahydrofolate + L-serine. Its pathway is one-carbon metabolism; tetrahydrofolate interconversion. The protein operates within amino-acid biosynthesis; glycine biosynthesis; glycine from L-serine: step 1/1. Catalyzes the reversible interconversion of serine and glycine with tetrahydrofolate (THF) serving as the one-carbon carrier. This reaction serves as the major source of one-carbon groups required for the biosynthesis of purines, thymidylate, methionine, and other important biomolecules. Also exhibits THF-independent aldolase activity toward beta-hydroxyamino acids, producing glycine and aldehydes, via a retro-aldol mechanism. In Borreliella burgdorferi (strain ATCC 35210 / DSM 4680 / CIP 102532 / B31) (Borrelia burgdorferi), this protein is Serine hydroxymethyltransferase.